The following is a 673-amino-acid chain: ATP-binding cassette sub-family G member 8 (673 aa).

The segment covering 1–11 (MAGKAAEERGL) has biased composition (basic and acidic residues). The disordered stretch occupies residues 1 to 25 (MAGKAAEERGLPKGATPQDTSGLQD). At 1 to 416 (MAGKAAEERG…ISNDFRDLPT (416 aa)) the chain is on the cytoplasmic side. In terms of domain architecture, ABC transporter spans 47–313 (LEVRDLNYQV…FTAIGYPCPR (267 aa)). One can recognise an ABC transmembrane type-2 domain in the interval 411–665 (FRDLPTLLIH…VLYYVSLRFI (255 aa)). A helical membrane pass occupies residues 417–437 (LLIHGAEACLMSMTIGFLYFG). Topologically, residues 438–447 (HGSIQLSFMD) are extracellular. A helical transmembrane segment spans residues 448–468 (TAALLFMIGALIPFNVILDVI). The Cytoplasmic portion of the chain corresponds to 469–497 (SKCYSERAMLYYELEDGLYTTGPYFFAKI). Residues 498-518 (LGELPEHCAYIIIYGMPTYWL) traverse the membrane as a helical segment. At 519–527 (ANLRPGLQP) the chain is on the extracellular side. Residues 528–548 (FLLHFLLVWLVVFCCRIMALA) traverse the membrane as a helical segment. Residues 549 to 555 (AAALLPT) lie on the Cytoplasmic side of the membrane. Residues 556–576 (FHMASFFSNALYNSFYLAGGF) form a helical membrane-spanning segment. The Extracellular portion of the chain corresponds to 577 to 639 (MINLSSLWTV…LSVMELDSYP (63 aa)). N-linked (GlcNAc...) asparagine glycosylation occurs at Asn619. The helical transmembrane segment at 640–660 (LYAIYLIVIGLSGGFMVLYYV) threads the bilayer. At 661-673 (SLRFIKQKPSQDW) the chain is on the cytoplasmic side.

The protein belongs to the ABC transporter superfamily. ABCG family. Eye pigment precursor importer (TC 3.A.1.204) subfamily. Heterodimer with ABCG8. Mg(2+) serves as cofactor. In terms of processing, N-glycosylated. As to expression, predominantly expressed in the liver. Low expression levels in the small intestine and colon. Very low levels in other tissues, including brain, heart and spleen.

Its subcellular location is the cell membrane. The protein localises to the apical cell membrane. It catalyses the reaction cholesterol(in) + ATP + H2O = cholesterol(out) + ADP + phosphate + H(+). It carries out the reaction sitosterol(in) + ATP + H2O = sitosterol(out) + ADP + phosphate + H(+). With respect to regulation, the ATPase activity of the heterodimer is stimulated by cholate. Taurocholate, glycocholate, taurochenodeoxycholate, glycochenodeoxycholate and taurodeoxycholate also stimulate ATPase activity, but to a lower degree. Glycodeoxycholate has no significant effect on ATPase activity. ATPase activity is inhibited by vanadate and by berillium fluoride. Its function is as follows. ABCG5 and ABCG8 form an obligate heterodimer that mediates Mg(2+)- and ATP-dependent sterol transport across the cell membrane. Plays an essential role in the selective transport of the dietary cholesterol in and out of the enterocytes and in the selective sterol excretion by the liver into bile. Required for normal sterol homeostasis. The heterodimer with ABCG5 has ATPase activity. This is ATP-binding cassette sub-family G member 8 from Homo sapiens (Human).